The sequence spans 386 residues: Succinate--CoA ligase [ADP-forming] subunit beta (386 aa).

The 236-residue stretch at 9–244 (KDLLASYDVP…PSQENVRDVL (236 aa)) folds into the ATP-grasp domain. Residues Lys-46, 53 to 55 (GRG), Val-102, and Glu-107 each bind ATP. The Mg(2+) site is built by Asn-199 and Asp-213. Substrate contacts are provided by residues Asn-264 and 321-323 (GIM).

Belongs to the succinate/malate CoA ligase beta subunit family. Heterotetramer of two alpha and two beta subunits. Mg(2+) is required as a cofactor.

The enzyme catalyses succinate + ATP + CoA = succinyl-CoA + ADP + phosphate. It carries out the reaction GTP + succinate + CoA = succinyl-CoA + GDP + phosphate. It participates in carbohydrate metabolism; tricarboxylic acid cycle; succinate from succinyl-CoA (ligase route): step 1/1. Its function is as follows. Succinyl-CoA synthetase functions in the citric acid cycle (TCA), coupling the hydrolysis of succinyl-CoA to the synthesis of either ATP or GTP and thus represents the only step of substrate-level phosphorylation in the TCA. The beta subunit provides nucleotide specificity of the enzyme and binds the substrate succinate, while the binding sites for coenzyme A and phosphate are found in the alpha subunit. The protein is Succinate--CoA ligase [ADP-forming] subunit beta of Chlamydia pneumoniae (Chlamydophila pneumoniae).